We begin with the raw amino-acid sequence, 1376 residues long: Phospholipid-transporting ATPase DRS2 (1376 aa).

The span at 1-10 (MAGRPTGGPQ) shows a compositional bias: gly residues. Disordered regions lie at residues 1 to 151 (MAGR…AAAR) and 180 to 217 (GYSE…PKRD). Over 1–306 (MAGRPTGGPQ…QIPGLSPTNR (306 aa)) the chain is Cytoplasmic. Over residues 40–50 (DLMRTYTRDQE) the composition is skewed to basic and acidic residues. Low complexity predominate over residues 85-96 (QSSSSNNNNNNN). Polar residues predominate over residues 97–115 (VSAPYSRSGRQYSQTSDLG). A compositionally biased stretch (gly residues) spans 191–203 (PGGGGGGAGGGGH). The helical transmembrane segment at 307-327 (FTTIIPLVAVLMVSAGKELVE) threads the bilayer. Residues 328 to 509 (DYRRKQADAA…KVEKKLNTLV (182 aa)) are Extracellular-facing. Asn339, Asn433, and Asn490 each carry an N-linked (GlcNAc...) asparagine glycan. A helical transmembrane segment spans residues 510-530 (LLLVGILMVLSIISTVGDLII). Over 531-559 (RRVEGDAISYLMLDQPDTAGKIAETFFKD) the chain is Cytoplasmic. The chain crosses the membrane as a helical span at residues 560 to 580 (MVTYWVLFSSLVPISLFVTVE). At 581-1107 (MVKYWHGILI…VFSGAVIYES (527 aa)) the chain is on the extracellular side. Catalysis depends on Asp625, which acts as the 4-aspartylphosphate intermediate. ATP-binding residues include Asp625, Lys626, and Thr627. Asp625 provides a ligand contact to Mg(2+). Thr627 serves as a coordination point for Mg(2+). Asn679 is a glycosylation site (N-linked (GlcNAc...) asparagine). Glu720 and Phe761 together coordinate ATP. Asn762 is a glycosylation site (N-linked (GlcNAc...) asparagine). Ser763, Lys766, Lys784, Arg817, Thr818, Thr898, Gly899, Asp900, Arg991, and Lys997 together coordinate ATP. Asp1018 lines the Mg(2+) pocket. 2 residues coordinate ATP: Asn1021 and Asp1022. Asp1022 provides a ligand contact to Mg(2+). Asn1083 is a glycosylation site (N-linked (GlcNAc...) asparagine). The helical transmembrane segment at 1108-1128 (WTLTFYNVFYTVLPPLALGIL) threads the bilayer. At 1129–1165 (DQFISARLLDRYPQLYSMGQQNQFFRMKVFIEWLLNA) the chain is on the cytoplasmic side. A helical membrane pass occupies residues 1166–1186 (VYHSIILYVFGELIWHGDLIL). Residues 1187 to 1190 (ENGQ) are Extracellular-facing. Residues 1191–1211 (IAGHWMWGTALYAPVLLTVLG) traverse the membrane as a helical segment. Lys1212 is an a 1,2-diacyl-sn-glycero-3-phospho-(1D-myo-inositol 4-phosphate) binding site. The Cytoplasmic segment spans residues 1212–1224 (KAGLVTSNWTKYH). A helical membrane pass occupies residues 1225–1245 (VIAIPGSMAIWWIFIAVYGTV). At 1246–1257 (APMIPFSPEFHG) the chain is on the extracellular side. The helical transmembrane segment at 1258 to 1278 (IVPKLYSSPIFWLQSFALAIL) threads the bilayer. Residues 1279–1376 (CLLRDFAWKY…TSSRPQGQGT (98 aa)) are Cytoplasmic-facing. A 1,2-diacyl-sn-glycero-3-phospho-(1D-myo-inositol 4-phosphate) contacts are provided by Arg1282, Trp1286, Lys1287, Tyr1298, and His1299.

This sequence belongs to the cation transport ATPase (P-type) (TC 3.A.3) family. Type IV subfamily. The cofactor is Mg(2+).

Its subcellular location is the cell membrane. The protein resides in the golgi apparatus. It is found in the trans-Golgi network membrane. The catalysed reaction is ATP + H2O + phospholipidSide 1 = ADP + phosphate + phospholipidSide 2.. The enzyme catalyses a 1,2-diacyl-sn-glycero-3-phospho-L-serine(out) + ATP + H2O = a 1,2-diacyl-sn-glycero-3-phospho-L-serine(in) + ADP + phosphate + H(+). It carries out the reaction a 1,2-diacyl-sn-glycero-3-phosphoethanolamine(out) + ATP + H2O = a 1,2-diacyl-sn-glycero-3-phosphoethanolamine(in) + ADP + phosphate + H(+). In terms of biological role, catalytic component of a P4-ATPase flippase complex which catalyzes the hydrolysis of ATP coupled to the transport of phosphatidylserine and small amounts of ethanolamine from the lumen to the cytosolic leaflet of the trans-Golgi network and cell membrane and ensures the maintenance of asymmetric distribution of phospholipids. Required for efficient vesicle transport during toxin secretion. The sequence is that of Phospholipid-transporting ATPase DRS2 (DRS2) from Verticillium dahliae (strain VdLs.17 / ATCC MYA-4575 / FGSC 10137) (Verticillium wilt).